We begin with the raw amino-acid sequence, 317 residues long: MKRVTGVFLTLLRFSQFASSVLVMSLLAYAIHAYGNRGNKKTNFTLATGVISVFYLIALGILCLALPTLIYIGMYFCAELIVCMLWLAAFVVLAKAQGERSCSNTNADGLYYNPYSGQYTADSHRRACNSSQAAIAFSGLCFVLFLISVILLGINVLTPIRKRYQTQGMWRSGASMGTKLHRWSGLALSEPFEETAAYDNTNVRTGDVEAGAGDNAAYTSEPNGDARYATNDPNGQYHTTTTNTRYTTTTADPKTRYTTNDRNPGSANVANSAVDQHAYSTDESGDRSYQEKVTEGAHSGAMSGSTAEPNRNVNQMP.

Residues 1–13 (MKRVTGVFLTLLR) lie on the Cytoplasmic side of the membrane. A helical transmembrane segment spans residues 14 to 34 (FSQFASSVLVMSLLAYAIHAY). Over 35–49 (GNRGNKKTNFTLATG) the chain is Extracellular. A glycan (N-linked (GlcNAc...) asparagine) is linked at asparagine 43. A helical transmembrane segment spans residues 50 to 70 (VISVFYLIALGILCLALPTLI). Residue tyrosine 71 is a topological domain, cytoplasmic. Residues 72 to 92 (IGMYFCAELIVCMLWLAAFVV) form a helical membrane-spanning segment. Over 93 to 133 (LAKAQGERSCSNTNADGLYYNPYSGQYTADSHRRACNSSQA) the chain is Extracellular. An N-linked (GlcNAc...) asparagine glycan is attached at asparagine 129. The helical transmembrane segment at 134–154 (AIAFSGLCFVLFLISVILLGI) threads the bilayer. The Cytoplasmic segment spans residues 155-317 (NVLTPIRKRY…EPNRNVNQMP (163 aa)). The tract at residues 204-317 (RTGDVEAGAG…EPNRNVNQMP (114 aa)) is disordered. Residues 239 to 250 (TTTTNTRYTTTT) show a composition bias toward low complexity. Residues 256-282 (RYTTNDRNPGSANVANSAVDQHAYSTD) show a composition bias toward polar residues. Basic and acidic residues predominate over residues 284-295 (SGDRSYQEKVTE). The span at 302–317 (MSGSTAEPNRNVNQMP) shows a compositional bias: polar residues.

It is found in the membrane. This is an uncharacterized protein from Saccharomyces cerevisiae (strain ATCC 204508 / S288c) (Baker's yeast).